Here is a 126-residue protein sequence, read N- to C-terminus: Small ribosomal subunit protein uS13 (126 aa).

The tract at residues 95-126 (GLPVRGQRTHTNARTRKGPRKTVAGKKKPGKK) is disordered.

This sequence belongs to the universal ribosomal protein uS13 family. As to quaternary structure, part of the 30S ribosomal subunit. Forms a loose heterodimer with protein S19. Forms two bridges to the 50S subunit in the 70S ribosome.

Located at the top of the head of the 30S subunit, it contacts several helices of the 16S rRNA. In the 70S ribosome it contacts the 23S rRNA (bridge B1a) and protein L5 of the 50S subunit (bridge B1b), connecting the 2 subunits; these bridges are implicated in subunit movement. Contacts the tRNAs in the A and P-sites. This is Small ribosomal subunit protein uS13 from Acidothermus cellulolyticus (strain ATCC 43068 / DSM 8971 / 11B).